Reading from the N-terminus, the 288-residue chain is uncharacterized protein (288 aa).

The helical transmembrane segment at 92–112 threads the bilayer; that stretch reads LPTILVILGVIVVIAIVYAII. Positions 121–183 are disordered; that stretch reads DDHNAASEKA…NDSEKLEIKA (63 aa). 2 stretches are compositionally biased toward basic and acidic residues: residues 136–146 and 154–181; these read SKYEIPKDSTL and SEKETDTKKETKENEDKKKENDSEKLEI. A coiled-coil region spans residues 147–185; the sequence is KENQNNSSEKETDTKKETKENEDKKKENDSEKLEIKAAG.

The protein resides in the cell membrane. This is an uncharacterized protein from Bacillus subtilis (strain 168).